Reading from the N-terminus, the 666-residue chain is Zinc finger MYM-type protein 5 (666 aa).

Glycyl lysine isopeptide (Lys-Gly) (interchain with G-Cter in SUMO2) cross-links involve residues Lys85, Lys88, Lys146, and Lys163. The segment at 87-106 is disordered; that stretch reads EKPQGNYSVIPPPSRDLASQ. The interval 191-212 is disordered; that stretch reads SPDSWISQSASFPRNQKQPGVD. The segment covering 194–208 has biased composition (polar residues); sequence SWISQSASFPRNQKQ. Lys222 participates in a covalent cross-link: Glycyl lysine isopeptide (Lys-Gly) (interchain with G-Cter in SUMO2). MYM-type zinc fingers lie at residues 262–296, 308–348, 355–390, and 401–428; these read HLFCCTTCLSSFSHKRTQNTRSVICKKFASTKKAD, QEFC…RHEV, HKLCSNHCFNKYRLANGLIMNCCEHCGEYMPSKSTG, and KRFCCQSCINEYKQMMETKSKKLTASEN. Residues Lys440, Lys452, Lys459, and Lys549 each participate in a glycyl lysine isopeptide (Lys-Gly) (interchain with G-Cter in SUMO2) cross-link.

Interacts (via N-terminal 120 amino acid region) with ETV5 (via C-terminal).

It is found in the nucleus. In terms of biological role, functions as a transcriptional regulator. This is Zinc finger MYM-type protein 5 (ZMYM5) from Macaca fascicularis (Crab-eating macaque).